We begin with the raw amino-acid sequence, 503 residues long: Transmembrane protein 184C (503 aa).

The next 7 membrane-spanning stretches (helical) occupy residues 17–37, 48–68, 83–103, 115–135, 212–232, 254–274, and 287–307; these read LLIL…IWEF, VWFI…CGIL, IIRI…ALKY, ECYE…YLTI, YLVI…LLFY, VVFV…VGVI, and AVAT…AAIA. Disordered stretches follow at residues 358 to 391 and 479 to 503; these read PKKK…SPVG and SPKP…STDS. A compositionally biased stretch (low complexity) spans 373-388; that stretch reads SSLLSASSQDSSKPSS. Positions 494–503 are enriched in polar residues; it reads PEGSDSSTDS.

The protein belongs to the TMEM184 family.

It is found in the membrane. Functionally, possible tumor suppressor which may play a role in cell growth. The sequence is that of Transmembrane protein 184C (Tmem184c) from Rattus norvegicus (Rat).